The chain runs to 290 residues: Pyridoxal kinase PdxY (290 aa).

Substrate contacts are provided by residues Ser12 and 47–48; that span reads TQ. Residues Asp114, Glu151, Lys184, and 211–214 contribute to the ATP site; that span reads RPLL. Asp225 is a substrate binding site.

Belongs to the pyridoxine kinase family. PdxY subfamily. In terms of assembly, homodimer. Mg(2+) serves as cofactor.

The catalysed reaction is pyridoxal + ATP = pyridoxal 5'-phosphate + ADP + H(+). The protein operates within cofactor metabolism; pyridoxal 5'-phosphate salvage; pyridoxal 5'-phosphate from pyridoxal: step 1/1. Functionally, pyridoxal kinase involved in the salvage pathway of pyridoxal 5'-phosphate (PLP). Catalyzes the phosphorylation of pyridoxal to PLP. This is Pyridoxal kinase PdxY from Pseudomonas fluorescens (strain Pf0-1).